The following is a 66-amino-acid chain: Large ribosomal subunit protein bL35 (66 aa).

Residues 1 to 16 (MPKQKTHRASAKRFKR) are compositionally biased toward basic residues. The disordered stretch occupies residues 1-21 (MPKQKTHRASAKRFKRTGSGG).

This sequence belongs to the bacterial ribosomal protein bL35 family.

This is Large ribosomal subunit protein bL35 from Streptococcus pneumoniae serotype 2 (strain D39 / NCTC 7466).